The sequence spans 732 residues: Catalase-peroxidase (732 aa).

The segment at residues tryptophan 96–tyrosine 219 is a cross-link (tryptophyl-tyrosyl-methioninium (Trp-Tyr) (with M-245)). The active-site Proton acceptor is the histidine 97. Positions tyrosine 219 to methionine 245 form a cross-link, tryptophyl-tyrosyl-methioninium (Tyr-Met) (with W-96). Heme b is bound at residue histidine 260.

This sequence belongs to the peroxidase family. Peroxidase/catalase subfamily. In terms of assembly, homodimer or homotetramer. Heme b is required as a cofactor. Post-translationally, formation of the three residue Trp-Tyr-Met cross-link is important for the catalase, but not the peroxidase activity of the enzyme.

It catalyses the reaction H2O2 + AH2 = A + 2 H2O. It carries out the reaction 2 H2O2 = O2 + 2 H2O. Functionally, bifunctional enzyme with both catalase and broad-spectrum peroxidase activity. The polypeptide is Catalase-peroxidase (Acaryochloris marina (strain MBIC 11017)).